We begin with the raw amino-acid sequence, 97 residues long: U6-theraphotoxin-Hhn1a 2 (97 aa).

The first 33 residues, 1–33, serve as a signal peptide directing secretion; it reads MLIKQFSRRPKNMKVQILLAFAALFVLAVGSYA. Positions 34–61 are excised as a propeptide; that stretch reads SESKKLDLRDASFSAMFSADYQLNPQER. Intrachain disulfides connect cysteine 63-cysteine 77, cysteine 70-cysteine 82, and cysteine 76-cysteine 89.

The protein belongs to the neurotoxin 10 (Hwtx-1) family. 12 (Hntx-12) subfamily. As to expression, expressed by the venom gland.

It localises to the secreted. Ion channel inhibitor. The chain is U6-theraphotoxin-Hhn1a 2 from Cyriopagopus hainanus (Chinese bird spider).